Reading from the N-terminus, the 275-residue chain is Nitrogenase iron protein 1 (275 aa).

G9–S16 contributes to the ATP binding site. Position 97 (C97) interacts with [4Fe-4S] cluster. ADP-ribosylarginine; by dinitrogenase reductase ADP-ribosyltransferase is present on R100. Residue C132 coordinates [4Fe-4S] cluster.

This sequence belongs to the NifH/BchL/ChlL family. In terms of assembly, homodimer. The cofactor is [4Fe-4S] cluster. Post-translationally, the reversible ADP-ribosylation of Arg-100 inactivates the nitrogenase reductase and regulates nitrogenase activity.

The enzyme catalyses N2 + 8 reduced [2Fe-2S]-[ferredoxin] + 16 ATP + 16 H2O = H2 + 8 oxidized [2Fe-2S]-[ferredoxin] + 2 NH4(+) + 16 ADP + 16 phosphate + 6 H(+). In terms of biological role, the key enzymatic reactions in nitrogen fixation are catalyzed by the nitrogenase complex, which has 2 components: the iron protein and the molybdenum-iron protein. The chain is Nitrogenase iron protein 1 (nifH1) from Methanothermobacter thermautotrophicus (strain ATCC 29096 / DSM 1053 / JCM 10044 / NBRC 100330 / Delta H) (Methanobacterium thermoautotrophicum).